Reading from the N-terminus, the 372-residue chain is Neutral protease 2 homolog MGYG_06241 (372 aa).

An N-terminal signal peptide occupies residues 1-19; the sequence is MQFFTAIAAISALVAPALA. Residues 20–188 constitute a propeptide that is removed on maturation; sequence LPTQELPQAP…THFAGTLNRR (169 aa). 2 cysteine pairs are disulfide-bonded: Cys195/Cys264 and Cys271/Cys289. His313 is a Zn(2+) binding site. Glu314 is an active-site residue. Residues His317 and Asp328 each coordinate Zn(2+).

The protein belongs to the peptidase M35 family. Requires Zn(2+) as cofactor.

Its subcellular location is the secreted. It catalyses the reaction Preferential cleavage of bonds with hydrophobic residues in P1'. Also 3-Asn-|-Gln-4 and 8-Gly-|-Ser-9 bonds in insulin B chain.. Its function is as follows. Secreted metalloproteinase that allows assimilation of proteinaceous substrates. Shows high activities on basic nuclear substrates such as histone and protamine. May be involved in virulence. In Arthroderma gypseum (strain ATCC MYA-4604 / CBS 118893) (Microsporum gypseum), this protein is Neutral protease 2 homolog MGYG_06241.